A 333-amino-acid chain; its full sequence is Glycerol-3-phosphate dehydrogenase [NAD(P)+] (333 aa).

NADPH-binding residues include S13, W14, R34, and K108. Positions 108, 137, and 139 each coordinate sn-glycerol 3-phosphate. A141 provides a ligand contact to NADPH. The sn-glycerol 3-phosphate site is built by K192, D245, S255, R256, and N257. The active-site Proton acceptor is the K192. R256 is an NADPH binding site. An NADPH-binding site is contributed by E282.

This sequence belongs to the NAD-dependent glycerol-3-phosphate dehydrogenase family.

It is found in the cytoplasm. It catalyses the reaction sn-glycerol 3-phosphate + NAD(+) = dihydroxyacetone phosphate + NADH + H(+). The enzyme catalyses sn-glycerol 3-phosphate + NADP(+) = dihydroxyacetone phosphate + NADPH + H(+). It participates in membrane lipid metabolism; glycerophospholipid metabolism. Its function is as follows. Catalyzes the reduction of the glycolytic intermediate dihydroxyacetone phosphate (DHAP) to sn-glycerol 3-phosphate (G3P), the key precursor for phospholipid synthesis. The protein is Glycerol-3-phosphate dehydrogenase [NAD(P)+] of Thioalkalivibrio sulfidiphilus (strain HL-EbGR7).